The following is a 588-amino-acid chain: Adenine deaminase (588 aa).

This sequence belongs to the metallo-dependent hydrolases superfamily. Adenine deaminase family. Homodimer. Mn(2+) serves as cofactor.

It carries out the reaction adenine + H2O + H(+) = hypoxanthine + NH4(+). The sequence is that of Adenine deaminase from Escherichia coli O9:H4 (strain HS).